The following is a 359-amino-acid chain: Membrane-bound lytic murein transglycosylase C (359 aa).

A signal peptide spans 1–16; that stretch reads MKKYLALALIAPLLIS. Cys17 carries N-palmitoyl cysteine lipidation. Residue Cys17 is the site of S-diacylglycerol cysteine attachment.

Belongs to the transglycosylase Slt family.

Its subcellular location is the cell outer membrane. The catalysed reaction is Exolytic cleavage of the (1-&gt;4)-beta-glycosidic linkage between N-acetylmuramic acid (MurNAc) and N-acetylglucosamine (GlcNAc) residues in peptidoglycan, from either the reducing or the non-reducing ends of the peptidoglycan chains, with concomitant formation of a 1,6-anhydrobond in the MurNAc residue.. Murein-degrading enzyme. May play a role in recycling of muropeptides during cell elongation and/or cell division. This chain is Membrane-bound lytic murein transglycosylase C, found in Escherichia coli O127:H6 (strain E2348/69 / EPEC).